Here is a 1423-residue protein sequence, read N- to C-terminus: ABC transporter G family member 40 (1423 aa).

Polar residues predominate over residues 1–19 (MEGTSFHQASNSMRRNSSV). Residues 1-36 (MEGTSFHQASNSMRRNSSVWKKDSGREIFSRSSREE) are disordered. An N-linked (GlcNAc...) asparagine glycan is attached at asparagine 16. The segment covering 20 to 34 (WKKDSGREIFSRSSR) has biased composition (basic and acidic residues). The ABC transporter 1 domain maps to 154–427 (LNTLHLVPNR…FETMGFKCPP (274 aa)). 187 to 194 (GPPSSGKT) lines the ATP pocket. Asparagine 376 is a glycosylation site (N-linked (GlcNAc...) asparagine). The region spanning 505–718 (ELVKTSFSRE…GQNAILANEF (214 aa)) is the ABC transmembrane type-2 1 domain. 6 helical membrane-spanning segments follow: residues 523–543 (FVYYFKFGQLLVMAFLTMTLF), 562–582 (ALFFILMMLMFNGMSELSMTI), 611–631 (IPISFMEAALTTFITYYVIGF), 643–663 (ILLVLMNQMASALFKMVAALG), 667–687 (IVANTFGAFAMLVFFALGGVV), and 696–716 (WWIWGYWISPIMYGQNAILAN). N-linked (GlcNAc...) asparagine glycosylation occurs at asparagine 729. A helical membrane pass occupies residues 756-776 (GALLGFVVLFNFGFTLALTFL). The 253-residue stretch at 825–1077 (ITFDNVVYSV…HLINYFESIQ (253 aa)) folds into the ABC transporter 2 domain. ATP is bound at residue 870–877 (GVSGAGKT). Residue asparagine 895 is glycosylated (N-linked (GlcNAc...) asparagine). Residue threonine 962 is modified to Phosphothreonine. The 215-residue stretch at 1150-1364 (TQCMASLWKQ…TLYGLIASQF (215 aa)) folds into the ABC transmembrane type-2 2 domain. 6 helical membrane-spanning segments follow: residues 1174-1194 (FLFTIGIALMFGTMFWDLGGK), 1207-1227 (SMYTAVLFLGLQNAASVQPVV), 1257-1277 (IPYVLVQAIVYGLIVYAMIGF), 1284-1304 (FFWYLFFMYGSFLTFTFYGMM), 1314-1334 (IASVVSSAFYGIWNLFSGFLI), and 1341-1361 (VWWEWYYWLCPVAWTLYGLIA). Asparagine 1375 carries an N-linked (GlcNAc...) asparagine glycan. A helical transmembrane segment spans residues 1395 to 1415 (VVAAMNVIFPLLFAVIFAIGI).

This sequence belongs to the ABC transporter superfamily. ABCG family. PDR (TC 3.A.1.205) subfamily. As to quaternary structure, interacts with LECRK91 and LECRK92. In terms of tissue distribution, mostly observed in inflorescence meristems relative to cauline leaves and developing siliques. Ubiquitous with higher levels in leaves, stems and flowers. Also present in primary and lateral roots. In seeds, mainly expressed in the embryo and, to a lesser extent, in the endosperm.

The protein localises to the cell membrane. It catalyses the reaction abscisate(out) + ATP + H2O = abscisate(in) + ADP + phosphate + H(+). Its activity is regulated as follows. Inhibited by glibenclamide, verapamil and vanadate (ABC transporters inhibitors). Functionally, high affinity abscisic acid (ABA) transporter that mediates the import of ABA, with a preference for (+)-ABA, through the plasma membrane, especially in guard cells, and is involved in the intercellular and intracellular ABA signaling pathways leading, for example, to stomatal closure, thus conferring drought tolerance. Together with ABCG30, import into the embryo the ABA delivered from the endosperm via ABCG25 and ABCG31-mediated export to suppress radicle extension and subsequent embryonic growth. May be a general defense protein. Functions as a pump to exclude Pb(2+) ions and/or Pb(2+)-containing toxic compounds from the cytoplasm. Contributes to Pb(2+) ions resistance. Confers some resistance to the terpene sclareol. Its function is as follows. (Microbial infection) Involved in resistance response to the pathogenic oomycetes Phytophthora infestans and Phytophthora capsici. This is ABC transporter G family member 40 from Arabidopsis thaliana (Mouse-ear cress).